The following is a 448-amino-acid chain: MKKEKTERTKQSWRKAQNAPSLSEVNNSVAIPKNAKFFRKLFAFMGPGALIAVGYVDPGNWATSIAGGSEFGYTLLSVILISNILAVLLQSLASKLGIVTGRDLAQASSDHFSKPFGFVLWILAELAIIATDIAEVIGSAIALNLLFGIPLIWGVCITALDIFLVLFLQHKGFRYIEVIVITLMVTILVCFGAEMVMSHPDMQAIAKGFIPQSEIVTNPAMLYIALGILGATVMPHNLYLHSSIVQTRQYARTKEGKKEAIRFSFIDSTFSLTIALLINASILILAAAAFYTTGQHNVAGIEDAYKLLNPTLGSSIASTVFAVALLASGQNSTLTGTLAGQIVMEGFLNIRLKPVVRRLLTRVLAIVPAVIITALYGANGINELLIFSQVILSMQLSFAVIPLVMFTSDKEKMGEFVNPSWLKIISWAVAIFIAILNIYLLFYTITTL.

A run of 11 helical transmembrane segments spans residues 41–61 (LFAFMGPGALIAVGYVDPGNW), 69–89 (SEFGYTLLSVILISNILAVLL), 117–137 (GFVLWILAELAIIATDIAEVI), 147–167 (FGIPLIWGVCITALDIFLVLF), 176–196 (IEVIVITLMVTILVCFGAEMV), 215–235 (IVTNPAMLYIALGILGATVMP), 270–290 (FSLTIALLINASILILAAAAF), 307–327 (LLNPTLGSSIASTVFAVALLA), 363–383 (VLAIVPAVIITALYGANGINE), 384–404 (LLIFSQVILSMQLSFAVIPLV), and 424–444 (IISWAVAIFIAILNIYLLFYT).

The protein belongs to the NRAMP family.

The protein resides in the cell membrane. Its function is as follows. H(+)-stimulated, divalent metal cation uptake system. This chain is Divalent metal cation transporter MntH, found in Listeria welshimeri serovar 6b (strain ATCC 35897 / DSM 20650 / CCUG 15529 / CIP 8149 / NCTC 11857 / SLCC 5334 / V8).